The following is a 1341-amino-acid chain: WD repeat-containing protein 19 (1341 aa).

WD repeat units lie at residues 11 to 51 (SWLG…RSEI), 52 to 92 (SLPG…TSQL), 95 to 134 (GMRD…KIPV), 137 to 175 (KHTK…IRQT), 273 to 311 (DHKD…DMYA), and 317 to 356 (DENK…LGDA). TPR repeat units follow at residues 736–769 (AQDL…AKRL), 775–808 (PFIS…DNKE), 840–873 (RVLK…DRAA), 895–928 (PKIH…NSVI), 951–984 (LDGA…NEAF), and 1020–1053 (EKRH…EDNV).

As to quaternary structure, component of the IFT complex A (IFT-A) complex. IFT-A complex is divided into a core subcomplex composed of IFT122:IFT140:WDR19 which is associated with TULP3 and a peripheral subcomplex composed of IFT43:WDR35:TTC21B. Interacts (via C-terminal region) with IFT122 (via C-terminal region). Interacts with BBS1. Interacts with TTC25. As to expression, tissue-specific expression of isoforms. Expressed in the prostate, testis, epididymis, submaxillary and salivary glands. Expressed in ependymal cells lining brain ventricles (at protein level).

It localises to the cell projection. The protein resides in the cilium. The protein localises to the cytoplasm. Its subcellular location is the cytoskeleton. It is found in the cilium basal body. It localises to the photoreceptor outer segment. The protein resides in the flagellum. Its function is as follows. As component of the IFT complex A (IFT-A), a complex required for retrograde ciliary transport and entry into cilia of G protein-coupled receptors (GPCRs), it is involved in cilia function and/or assembly. Essential for functional IFT-A assembly and ciliary entry of GPCRs. Associates with the BBSome complex to mediate ciliary transport. This chain is WD repeat-containing protein 19, found in Mus musculus (Mouse).